We begin with the raw amino-acid sequence, 214 residues long: Rho-related GTP-binding protein RhoJ (214 aa).

2 S-palmitoyl cysteine lipidation sites follow: C3 and C11. Residues 31 to 36, 46 to 53, 75 to 79, 133 to 136, and 177 to 178 contribute to the GTP site; these read AVGKTC, FPEEYVPT, DTAGQ, TQID, and AL. The short motif at 50-58 is the Effector region element; it reads YVPTVFDHY. C211 is modified (cysteine methyl ester). Residue C211 is the site of S-farnesyl cysteine attachment. A propeptide spans 212–214 (removed in mature form); it reads AII.

This sequence belongs to the small GTPase superfamily. Rho family. In terms of assembly, interacts with the CRIB domains of proteins such as Pak1 and Was/Wasp. Interacts with GLUL. Post-translationally, palmitoylated; regulates localization to the plasma membrane and may be mediated by GLUL. As to expression, highly expressed in heart with moderate levels in lung and liver. Very low levels detected in brain, spleen, skeletal muscle, kidney and testis.

It is found in the cell membrane. Functionally, plasma membrane-associated small GTPase specifically involved in angiogenesis. Required for endothelial cell migration during vascular development via its interaction with GLUL. Elicits the formation of F-actin-rich structures, thereby regulating endothelial cell migration. This chain is Rho-related GTP-binding protein RhoJ (Rhoj), found in Mus musculus (Mouse).